Consider the following 700-residue polypeptide: Elongation factor G (700 aa).

In terms of domain architecture, tr-type G spans 13–288 (SKIRNIGITA…AVIDYLPAPD (276 aa)). GTP-binding positions include 22–29 (AHIDAGKT), 86–90 (DTPGH), and 140–143 (NKLD).

This sequence belongs to the TRAFAC class translation factor GTPase superfamily. Classic translation factor GTPase family. EF-G/EF-2 subfamily.

The protein localises to the cytoplasm. Catalyzes the GTP-dependent ribosomal translocation step during translation elongation. During this step, the ribosome changes from the pre-translocational (PRE) to the post-translocational (POST) state as the newly formed A-site-bound peptidyl-tRNA and P-site-bound deacylated tRNA move to the P and E sites, respectively. Catalyzes the coordinated movement of the two tRNA molecules, the mRNA and conformational changes in the ribosome. The chain is Elongation factor G from Gluconobacter oxydans (strain 621H) (Gluconobacter suboxydans).